A 1207-amino-acid chain; its full sequence is MPQFTKEQQQAIDDRGHDILVSASAGSGKTTVLVERVLKEIISGTQVSELLVVTFTKAAAEEMKTRIKTALTKELAKPGVNRKYLREQLNQVDTANISTIDAFCLEVIRRFYYSVNLNPSFKILTDETQAALIKERALREIEAESLTDENSGIRYFYDNFAGDRDANSPRDLLLDLYNFAMAKPEYRSWLKNLAKIYEVNNNIVKSKLWQNQIKSYLLNTFVSLQKKIEEYLNNPTIETKELAKVKEDFSLFTQNLDKFIDAIKNDEDYDQQRNLLRLCKFEVKYRKSAKWDEDIQEFYAETQKLKSEAKSQIFDIFTAFYATDEKEQTRIMQESQKIVSAISKAELALIDRFNELKRNENFLDYSDMEQLAYQILSADTSNSQMAREFYQNKFKEILIDEYQDINALQERIIQQVKNTDKNTLFMVGDVKQSIYGFRQAEPSLFLKKYHGFASEENKHEKRILLSDNFRSTEPVTKTVNQLFKSILSSDFGGIDYSKEGQLIFGAKYYPDALPKASEIIVHKKQKDIDNDNNGIDFSEVEMVLARIKQLKKEHFQVLDSTTGEVRALKYSDIAILTRSHGDNLEIMQEFAKRDIPLFITDAENYFQTFELTVIMNYLKIIDNPDQDIPLVTVLRSPLFNFSEKDLAKIRINSKNSGFYSAVASYVGIGDELSDRCKNFLNKLDELRKFATTHRISELIWSIYAQTNLLEIMTGLPNGEQRRINLEALYERASSYESAGFKGLYQFINFINRMRRSQKDLAQPLLSKEAGNAVRLMTIHGSKGLEFPVVFYLGMQHQYQLRDLKGNYVINPDSLGITLRQEHYRVDSLVKAIGNVTKKRQLLEEEARVLYVALTRAKQKLILVGDIANLDKKVQDWSIELDQSGQLSLADKLSVTNPLGFMGPALAFDKHIVINMNDISNALDQSQSVLYVEYKDSDNFEFKKDEDKVVGDSKNNNYTMDKLISTTKKLYQFDYPFKDASETTAYQAVSEIKKAFNDPIETELENSRLLSSTNRYLQPIDTKPNFLYQTKFTGAEIGTATHLILQYYDYTGDGSEKQLDYEIEELIKQKKLNPDIVPSLHKDQIQWFVHSSFAKSFWKNPENLQREVDFSSLISAKNLFKDFSDANAKILVHGTIDGYFVSNDGIILFDYKTDHVNKSYLDKSINLIKEKYTGQLRLYEQAINEFGEEKVIGKYLILLDAKQVVEVK.

The UvrD-like helicase ATP-binding domain occupies 2-472 (PQFTKEQQQA…ILLSDNFRST (471 aa)). 23–30 (ASAGSGKT) lines the ATP pocket. In terms of domain architecture, UvrD-like helicase C-terminal spans 492–783 (GGIDYSKEGQ…RLMTIHGSKG (292 aa)).

Belongs to the helicase family. AddA subfamily. Heterodimer of AddA and AddB/RexB. Mg(2+) is required as a cofactor.

It carries out the reaction Couples ATP hydrolysis with the unwinding of duplex DNA by translocating in the 3'-5' direction.. The catalysed reaction is ATP + H2O = ADP + phosphate + H(+). Functionally, the heterodimer acts as both an ATP-dependent DNA helicase and an ATP-dependent, dual-direction single-stranded exonuclease. Recognizes the chi site generating a DNA molecule suitable for the initiation of homologous recombination. The AddA nuclease domain is required for chi fragment generation; this subunit has the helicase and 3' -&gt; 5' nuclease activities. This chain is ATP-dependent helicase/nuclease subunit A, found in Lactobacillus acidophilus (strain ATCC 700396 / NCK56 / N2 / NCFM).